Reading from the N-terminus, the 201-residue chain is Small ribosomal subunit protein uS4 (201 aa).

Residues 26–47 form a disordered region; that stretch reads LSKKNYPPGQHGNNRRRKTSEY. An S4 RNA-binding domain is found at 92 to 154; it reads ARLDNVVFRL…SKSLEVIADA (63 aa).

Belongs to the universal ribosomal protein uS4 family. Part of the 30S ribosomal subunit. Contacts protein S5. The interaction surface between S4 and S5 is involved in control of translational fidelity.

In terms of biological role, one of the primary rRNA binding proteins, it binds directly to 16S rRNA where it nucleates assembly of the body of the 30S subunit. With S5 and S12 plays an important role in translational accuracy. This is Small ribosomal subunit protein uS4 from Porphyromonas gingivalis (strain ATCC 33277 / DSM 20709 / CIP 103683 / JCM 12257 / NCTC 11834 / 2561).